A 226-amino-acid polypeptide reads, in one-letter code: uncharacterized protein (226 aa).

Residues 121–163 adopt a coiled-coil conformation; it reads TVDELIKTIEKELNKVKKSRKNREKKTNEVEEIIEELIEEDDI.

This is an uncharacterized protein from Methanocaldococcus jannaschii (strain ATCC 43067 / DSM 2661 / JAL-1 / JCM 10045 / NBRC 100440) (Methanococcus jannaschii).